The primary structure comprises 329 residues: Putative ubiquitin thioesterase otu1 (329 aa).

Positions 7–89 (RLKYENQSAV…ATSFSTNEPA (83 aa)) are UBX-like. The interval 85–127 (TNEPAKPPIPNAATKPTFPPQTEISNPPAVSHQSKNTSQDPPY) is disordered. Residues 115–124 (SHQSKNTSQD) are compositionally biased toward polar residues. One can recognise an OTU domain in the interval 135 to 254 (IALRVMPDDN…GIHYDLAALA (120 aa)). Residues 140-146 (MPDDNSC) form a cys-loop region. Asp143 is an active-site residue. Cys146 (nucleophile) is an active-site residue. The tract at residues 193–203 (IRKETSWGGYI) is variable-loop. The segment at 243–247 (YSGIH) is his-loop. Position 246 (Ile246) interacts with substrate. Residue His247 is part of the active site. The tract at residues 272-277 (VTITPY) is S2 site. Residues 299-323 (IRCTICGTGLVGEKDATAHALATGH) form a C2H2-type zinc finger. The active site involves His323.

Its subcellular location is the cytoplasm. It localises to the nucleus. The catalysed reaction is Thiol-dependent hydrolysis of ester, thioester, amide, peptide and isopeptide bonds formed by the C-terminal Gly of ubiquitin (a 76-residue protein attached to proteins as an intracellular targeting signal).. Functionally, hydrolase that can remove conjugated ubiquitin from proteins and may therefore play an important regulatory role at the level of protein turnover by preventing degradation. Has a role in meiosis. In Schizosaccharomyces pombe (strain 972 / ATCC 24843) (Fission yeast), this protein is Putative ubiquitin thioesterase otu1 (otu1).